The following is a 500-amino-acid chain: Lysine--tRNA ligase (500 aa).

Positions 410 and 417 each coordinate Mg(2+).

It belongs to the class-II aminoacyl-tRNA synthetase family. Homodimer. Mg(2+) is required as a cofactor.

The protein resides in the cytoplasm. The catalysed reaction is tRNA(Lys) + L-lysine + ATP = L-lysyl-tRNA(Lys) + AMP + diphosphate. The polypeptide is Lysine--tRNA ligase (Shewanella piezotolerans (strain WP3 / JCM 13877)).